Consider the following 264-residue polypeptide: Glutamate racemase (264 aa).

Residues 10-11 and 42-43 contribute to the substrate site; these read DS and YG. Cysteine 73 serves as the catalytic Proton donor/acceptor. Position 74–75 (74–75) interacts with substrate; sequence NT. Cysteine 183 functions as the Proton donor/acceptor in the catalytic mechanism. 184-185 is a substrate binding site; it reads TH.

It belongs to the aspartate/glutamate racemases family.

It catalyses the reaction L-glutamate = D-glutamate. It functions in the pathway cell wall biogenesis; peptidoglycan biosynthesis. Its function is as follows. Provides the (R)-glutamate required for cell wall biosynthesis. This chain is Glutamate racemase, found in Streptococcus pyogenes serotype M49 (strain NZ131).